A 132-amino-acid chain; its full sequence is Glycerol-3-phosphate cytidylyltransferase (132 aa).

CTP-binding positions include 9 to 10 (TY) and 14 to 17 (HYGH). Substrate is bound at residue K44. Residue K46 participates in CTP binding. K77 is a substrate binding site. 113–120 (RTEGISTT) contributes to the CTP binding site.

Belongs to the cytidylyltransferase family. As to quaternary structure, homotetramer or homodimer.

Its subcellular location is the cytoplasm. The enzyme catalyses sn-glycerol 3-phosphate + CTP + H(+) = CDP-glycerol + diphosphate. Its pathway is cell wall biogenesis; poly(ribitol phosphate) teichoic acid biosynthesis. Catalyzes the transfer of the cytidylyl group of CTP to sn-glycerol 3-phosphate so the activated glycerol 3-phosphate can be used for teichoic acid synthesis, via incorporation into both the linkage unit by TarB and TarF. In Staphylococcus aureus (strain NCTC 8325 / PS 47), this protein is Glycerol-3-phosphate cytidylyltransferase.